Consider the following 76-residue polypeptide: Glutathione S-transferase (76 aa).

One can recognise a GST N-terminal domain in the interval 1 to 40 (XVAFETVPVDLMKGEHKQPAYLALQPFGTVPAVVDGDYXL). The 36-residue stretch at 41–76 (LSAVLDVYEAHLHGYLAGDFVSLADLAHLPFTDYLV) folds into the GST C-terminal domain.

Belongs to the GST superfamily. Theta family.

It localises to the cytoplasm. The catalysed reaction is RX + glutathione = an S-substituted glutathione + a halide anion + H(+). Its function is as follows. Conjugation of reduced glutathione to a wide number of exogenous and endogenous hydrophobic electrophiles. In Brassica oleracea var. italica (Broccoli), this protein is Glutathione S-transferase.